Reading from the N-terminus, the 343-residue chain is Dimethyladenosine transferase 1, mitochondrial (343 aa).

The transit peptide at 1–27 (MAASGKLSTWRLPPLPTIREIIKLLRV) directs the protein to the mitochondrion. Positions 38, 63, 85, 86, 111, 112, and 141 each coordinate S-adenosyl-L-methionine.

It belongs to the class I-like SAM-binding methyltransferase superfamily. rRNA adenine N(6)-methyltransferase family. KsgA subfamily. Interacts with mitochondrial RNA polymerase POLRMT. Interacts with TFAM. Bound to the maturing mtSSU until the late stages of assembly.

The protein localises to the mitochondrion. The enzyme catalyses adenosine(N)/adenosine(N+1) in rRNA + 4 S-adenosyl-L-methionine = N(6)-dimethyladenosine(N)/N(6)-dimethyladenosine(N+1) in rRNA + 4 S-adenosyl-L-homocysteine + 4 H(+). Its function is as follows. S-adenosyl-L-methionine-dependent methyltransferase which specifically dimethylates mitochondrial 12S rRNA at the conserved stem loop. Also required for basal transcription of mitochondrial DNA, probably via its interaction with POLRMT and TFAM. Stimulates transcription independently of the methyltransferase activity. Mitochondrial methyltransferase which uses S-adenosyl methionine to dimethylate two highly conserved adjacent adenosine residues (A1583 and A1584) within the loop of helix 45 at the 3-prime end of 12S rRNA, thereby regulating the assembly or stability of the small subunit of the mitochondrial ribosome. Also required for basal transcription of mitochondrial DNA, probably via its interaction with POLRMT and TFAM. Stimulates transcription independently of the methyltransferase activity. This Pongo abelii (Sumatran orangutan) protein is Dimethyladenosine transferase 1, mitochondrial (TFB1M).